The primary structure comprises 132 residues: Small ribosomal subunit protein uS8 (132 aa).

The protein belongs to the universal ribosomal protein uS8 family. As to quaternary structure, part of the 30S ribosomal subunit. Contacts proteins S5 and S12.

Functionally, one of the primary rRNA binding proteins, it binds directly to 16S rRNA central domain where it helps coordinate assembly of the platform of the 30S subunit. This chain is Small ribosomal subunit protein uS8, found in Beijerinckia indica subsp. indica (strain ATCC 9039 / DSM 1715 / NCIMB 8712).